The following is a 492-amino-acid chain: Catalase (492 aa).

Residues His65 and Asn138 contribute to the active site. Residue Tyr348 participates in heme binding.

This sequence belongs to the catalase family. Homotetramer. It depends on heme as a cofactor.

The protein localises to the cytoplasm. It localises to the cytosol. It is found in the peroxisome matrix. It catalyses the reaction 2 H2O2 = O2 + 2 H2O. Its function is as follows. Catalyzes the degradation of hydrogen peroxide (H(2)O(2)) generated by peroxisomal oxidases to water and oxygen, thereby protecting cells from the toxic effects of hydrogen peroxide. The protein is Catalase of Soldanella alpina (Alpine snowbell).